A 258-amino-acid polypeptide reads, in one-letter code: Mediator of RNA polymerase II transcription subunit 4 (258 aa).

Residues Phe-52–Ile-101 are a coiled coil. 2 disordered regions span residues Gly-164–Asn-208 and Leu-234–Gln-258. Polar residues predominate over residues Ser-166 to Leu-190. The span at Ala-194–Gly-204 shows a compositional bias: gly residues. Residues Ser-246–Gln-258 are compositionally biased toward low complexity.

Belongs to the Mediator complex subunit 4 family. Component of the Mediator complex, which includes at least MED4, MED6, MED14, MED17, MED18, MED20, MED21, MED23, MED24, MED27, MED30 and MED31. Interacts with MED10 and MED21.

Its subcellular location is the nucleus. Functionally, component of the Mediator complex, a coactivator involved in the regulated transcription of nearly all RNA polymerase II-dependent genes. Mediator functions as a bridge to convey information from gene-specific regulatory proteins to the basal RNA polymerase II transcription machinery. Mediator is recruited to promoters by direct interactions with regulatory proteins and serves as a scaffold for the assembly of a functional preinitiation complex with RNA polymerase II and the general transcription factors. Required for activated transcription of the MtnA, MtnB and MtnD genes. This chain is Mediator of RNA polymerase II transcription subunit 4 (MED4), found in Drosophila melanogaster (Fruit fly).